Consider the following 486-residue polypeptide: Uridine/cytidine kinase UKL1, chloroplastic (486 aa).

A chloroplast-targeting transit peptide spans 1-47; that stretch reads MPEDSSSLDYAMEKASGPHFSGLRFDGLLSSSPPNSSVVSSLRSAVS. Residues 31-54 are compositionally biased toward low complexity; the sequence is SSPPNSSVVSSLRSAVSSSSPSSS. Residues 31 to 67 form a disordered region; it reads SSPPNSSVVSSLRSAVSSSSPSSSDPEAPKQPFIIGV. The tract at residues 59 to 264 is uridine kinase; it reads PKQPFIIGVS…ITQHIHTKLG (206 aa). Residues 274-486 form a uracil phosphoribosyltransferase region; that stretch reads NVYVIQSTFQ…RYFGTDEEDQ (213 aa). Residues K298, R307, and 341 to 344 contribute to the GTP site; that span reads CKKL. Positions 351 and 376 each coordinate 5-phospho-alpha-D-ribose 1-diphosphate. A GTP-binding site is contributed by R396. 5-phospho-alpha-D-ribose 1-diphosphate contacts are provided by residues D402, 407–410, and E473; that span reads TGNS. Residue 472 to 474 participates in uracil binding; the sequence is GEF.

In the N-terminal section; belongs to the uridine kinase family. This sequence in the C-terminal section; belongs to the UPRTase family. Expressed in roots, leaves and stems.

The protein localises to the plastid. It is found in the chloroplast. Its subcellular location is the cytoplasm. It carries out the reaction cytidine + ATP = CMP + ADP + H(+). It catalyses the reaction uridine + ATP = UMP + ADP + H(+). The protein operates within pyrimidine metabolism; CTP biosynthesis via salvage pathway; CTP from cytidine: step 1/3. It functions in the pathway pyrimidine metabolism; UMP biosynthesis via salvage pathway; UMP from uridine: step 1/1. Involved in the pyrimidine salvage pathway. Phosphorylates uridine to uridine monophosphate (UMP). Phosphorylates cytidine to cytidine monophosphate (CMP). Does not possess uracil phosphoribosyltransferase (UPRTase) activity that catalyzes the conversion of uracil and 5-phospho-alpha-D-ribose 1-diphosphate (PRPP) to UMP and diphosphate. The polypeptide is Uridine/cytidine kinase UKL1, chloroplastic (Arabidopsis thaliana (Mouse-ear cress)).